Here is a 248-residue protein sequence, read N- to C-terminus: MSPHKDFQSSSTPVPVCMENDPNCDLLRYLIALAIFIGLIAIFMFGCKAAMRLLTRKRNRDTTQSDTDVIYPRDDPRASRSHQNFGFMDPPPRYEQIFKRGGGTPSVITTREAPSVTRSTGDGSLPPSYEQAALNARRESRPQLPQGTLREVPLTAIDMEHPAMSTPSSTVLDMESEITNITNHAQACVHRYDASHANEVTRTAVAVTTESPAPAQSTSNALPELEAPEGGPPGYDTISLHNETVSTR.

A helical membrane pass occupies residues 30 to 50; it reads LIALAIFIGLIAIFMFGCKAA. Disordered regions lie at residues 59–91 and 208–248; these read NRDT…MDPP and TTES…VSTR. Polar residues-rich tracts occupy residues 210–220 and 239–248; these read ESPAPAQSTSN and SLHNETVSTR.

Its subcellular location is the membrane. This is an uncharacterized protein from Caenorhabditis elegans.